A 257-amino-acid chain; its full sequence is Imidazole glycerol phosphate synthase subunit HisF (257 aa).

Catalysis depends on residues D11 and D130.

It belongs to the HisA/HisF family. In terms of assembly, heterodimer of HisH and HisF.

Its subcellular location is the cytoplasm. It carries out the reaction 5-[(5-phospho-1-deoxy-D-ribulos-1-ylimino)methylamino]-1-(5-phospho-beta-D-ribosyl)imidazole-4-carboxamide + L-glutamine = D-erythro-1-(imidazol-4-yl)glycerol 3-phosphate + 5-amino-1-(5-phospho-beta-D-ribosyl)imidazole-4-carboxamide + L-glutamate + H(+). The protein operates within amino-acid biosynthesis; L-histidine biosynthesis; L-histidine from 5-phospho-alpha-D-ribose 1-diphosphate: step 5/9. Functionally, IGPS catalyzes the conversion of PRFAR and glutamine to IGP, AICAR and glutamate. The HisF subunit catalyzes the cyclization activity that produces IGP and AICAR from PRFAR using the ammonia provided by the HisH subunit. In Pseudoalteromonas translucida (strain TAC 125), this protein is Imidazole glycerol phosphate synthase subunit HisF.